Here is a 259-residue protein sequence, read N- to C-terminus: NADPH-dependent reductase BacG (259 aa).

Residues 12-15 (SQGI), 34-36 (SRN), 62-63 (DM), Ile90, Lys113, and 185-191 (GFIATDR) contribute to the NADP(+) site.

It belongs to the short-chain dehydrogenases/reductases (SDR) family. As to quaternary structure, homodimer.

The protein resides in the cytoplasm. The protein operates within antibiotic biosynthesis; bacilysin biosynthesis. Its function is as follows. Along with the bacABCDEF operon, BacG is involved in the biosynthesis of the nonribosomally synthesized dipeptide antibiotic bacilysin, composed of L-alanine and L-anticapsin. Bacilysin is an irreversible inactivator of the glutaminase domain of glucosamine synthetase. BacG catalyzes the stereoselective reduction of exocyclic-delta(3),delta(5)-dihydro-hydroxyphenylpyruvate (ex-H2HPP), adding a pro-S hydride equivalent to C4 position to yield tetrahydro-hydroxyphenylpyruvate (H4HPP). Although the 3Z,7R-ex-H2HPP isomer is kinetically disfavored by BacB and produced in a smaller quantity than 3E,7R-ex-H2HPP, it is the preferred substrate for the conjugate reduction reaction of BacG. The protein is NADPH-dependent reductase BacG of Bacillus subtilis (strain 168).